The primary structure comprises 1030 residues: Arrestin domain-containing protein F (1030 aa).

2 disordered regions span residues Met1–Arg27 and Glu119–Leu154. Positions Asn128–Thr137 are enriched in acidic residues. Low complexity predominate over residues Asn142–Asn152. Coiled coils occupy residues His320–Asn374 and Gln544–Gln577. Disordered stretches follow at residues Ser539–Ser572 and Asn885–Asn931. Basic and acidic residues predominate over residues Asn547–Asp562. Residues Ser910–Asn931 are compositionally biased toward low complexity.

This sequence belongs to the arrestin family.

In Dictyostelium discoideum (Social amoeba), this protein is Arrestin domain-containing protein F (adcF).